A 195-amino-acid polypeptide reads, in one-letter code: Probable GTP-binding protein EngB (195 aa).

Residues 22-195 (GRPEVALAGR…WAALLPFVAS (174 aa)) enclose the EngB-type G domain. GTP contacts are provided by residues 30–37 (GRSNVGKS), 57–61 (GKTQT), 75–78 (DVPG), 142–145 (TKAD), and 174–176 (FSA). Serine 37 and threonine 59 together coordinate Mg(2+).

The protein belongs to the TRAFAC class TrmE-Era-EngA-EngB-Septin-like GTPase superfamily. EngB GTPase family. It depends on Mg(2+) as a cofactor.

Functionally, necessary for normal cell division and for the maintenance of normal septation. This is Probable GTP-binding protein EngB from Geobacillus kaustophilus (strain HTA426).